Here is a 174-residue protein sequence, read N- to C-terminus: UPF0200 protein PAE1629 (174 aa).

9-16 provides a ligand contact to ATP; that stretch reads GLPGSGKT.

The protein belongs to the UPF0200 family.

This is UPF0200 protein PAE1629 from Pyrobaculum aerophilum (strain ATCC 51768 / DSM 7523 / JCM 9630 / CIP 104966 / NBRC 100827 / IM2).